A 293-amino-acid polypeptide reads, in one-letter code: Digeranylgeranylglyceryl phosphate synthase (293 aa).

The next 7 helical transmembrane spans lie at 26 to 46, 50 to 70, 107 to 127, 140 to 160, 215 to 235, 237 to 257, and 273 to 293; these read LMYGFGVVIGIYVSDPFFSDL, LLGYLTAVFLQASTFALNDYF, FVAAYLISPLAFIFAFAVSVL, FAGNVYIAFTMAAPFLFGSII, IASLFYLTAVSISPIPLFLLP, FLFDLKYAVPVSVTDVLLIYV, and YRKVTLVAMVLGLVGFFAGAF.

It belongs to the UbiA prenyltransferase family. DGGGP synthase subfamily. Requires Mg(2+) as cofactor.

Its subcellular location is the cell membrane. The catalysed reaction is sn-3-O-(geranylgeranyl)glycerol 1-phosphate + (2E,6E,10E)-geranylgeranyl diphosphate = 2,3-bis-O-(geranylgeranyl)-sn-glycerol 1-phosphate + diphosphate. Its pathway is membrane lipid metabolism; glycerophospholipid metabolism. Functionally, prenyltransferase that catalyzes the transfer of the geranylgeranyl moiety of geranylgeranyl diphosphate (GGPP) to the C2 hydroxyl of (S)-3-O-geranylgeranylglyceryl phosphate (GGGP). This reaction is the second ether-bond-formation step in the biosynthesis of archaeal membrane lipids. In Archaeoglobus fulgidus (strain ATCC 49558 / DSM 4304 / JCM 9628 / NBRC 100126 / VC-16), this protein is Digeranylgeranylglyceryl phosphate synthase.